A 360-amino-acid polypeptide reads, in one-letter code: Aspartate beta-hydroxylase domain-containing protein 1 (360 aa).

Over 1-45 the chain is Cytoplasmic; that stretch reads MWKGGNQEAVIEGSGGELGVPGSWGLQDAACHLARASLPIMFPWP. Residues 46–68 form a helical membrane-spanning segment; sequence LPLGSSALTMLLGALTSLFLWYC. Over 69–360 the chain is Lumenal; the sequence is YRLGSQDMQA…ALDFVFAPDP (292 aa).

The protein belongs to the aspartyl/asparaginyl beta-hydroxylase family.

It localises to the membrane. The chain is Aspartate beta-hydroxylase domain-containing protein 1 (Asphd1) from Mus musculus (Mouse).